The following is a 157-amino-acid chain: Small ribosomal subunit protein uS7cz/uS7cy (157 aa).

This sequence belongs to the universal ribosomal protein uS7 family. In terms of assembly, part of the 30S ribosomal subunit.

It is found in the plastid. Its subcellular location is the chloroplast. One of the primary rRNA binding proteins, it binds directly to 16S rRNA where it nucleates assembly of the head domain of the 30S subunit. In Welwitschia mirabilis (Tree tumbo), this protein is Small ribosomal subunit protein uS7cz/uS7cy (rps7-A).